We begin with the raw amino-acid sequence, 97 residues long: Co-chaperonin GroES (97 aa).

The protein belongs to the GroES chaperonin family. As to quaternary structure, heptamer of 7 subunits arranged in a ring. Interacts with the chaperonin GroEL.

The protein resides in the cytoplasm. Its function is as follows. Together with the chaperonin GroEL, plays an essential role in assisting protein folding. The GroEL-GroES system forms a nano-cage that allows encapsulation of the non-native substrate proteins and provides a physical environment optimized to promote and accelerate protein folding. GroES binds to the apical surface of the GroEL ring, thereby capping the opening of the GroEL channel. This Buchnera aphidicola subsp. Geoica urticularia protein is Co-chaperonin GroES.